Here is a 347-residue protein sequence, read N- to C-terminus: Fc receptor-like A (347 aa).

The first 27 residues, 1 to 27 (MKLSCMLIEWALYVCPAVLLATQMSLA), serve as a signal peptide directing secretion. 2 Ig-like C2-type domains span residues 77–166 (PFHL…ETAS) and 179–257 (PVLK…RQIS). 2 disulfides stabilise this stretch: Cys106/Cys150 and Cys199/Cys247. The disordered stretch occupies residues 272-296 (KPATPETPPPAKAPGPLPLLPTPSD). A compositionally biased stretch (pro residues) spans 276–292 (PETPPPAKAPGPLPLLP).

In terms of assembly, monomer or homodimer; disulfide-linked.

The protein resides in the cytoplasm. Functionally, may be implicated in B-cell differentiation and lymphomagenesis. The sequence is that of Fc receptor-like A (Fcrla) from Rattus norvegicus (Rat).